Here is a 174-residue protein sequence, read N- to C-terminus: Gamma-crystallin C (174 aa).

Beta/gamma crystallin 'Greek key' domains are found at residues 2 to 40 (GKIT…RVES) and 41 to 83 (GCWM…CLIP). S-methylcysteine is present on C23. Positions 84-87 (QTVS) are connecting peptide. 2 Beta/gamma crystallin 'Greek key' domains span residues 88–128 (HRLR…HVLE) and 129–171 (GCWV…RRVV).

It belongs to the beta/gamma-crystallin family. As to quaternary structure, monomer.

Crystallins are the dominant structural components of the vertebrate eye lens. The sequence is that of Gamma-crystallin C (CRYGC) from Homo sapiens (Human).